Here is a 384-residue protein sequence, read N- to C-terminus: Glutamate 5-kinase (384 aa).

K24 provides a ligand contact to ATP. Substrate contacts are provided by S64, D149, and N161. ATP-binding positions include 181 to 182 (TD) and 223 to 229 (TGGMRTK). A PUA domain is found at 288-370 (PGAILIDAGA…RDIQTLLGYT (83 aa)).

Belongs to the glutamate 5-kinase family.

The protein localises to the cytoplasm. It catalyses the reaction L-glutamate + ATP = L-glutamyl 5-phosphate + ADP. Its pathway is amino-acid biosynthesis; L-proline biosynthesis; L-glutamate 5-semialdehyde from L-glutamate: step 1/2. Functionally, catalyzes the transfer of a phosphate group to glutamate to form L-glutamate 5-phosphate. The polypeptide is Glutamate 5-kinase (Xylella fastidiosa (strain M12)).